Consider the following 103-residue polypeptide: Large ribosomal subunit protein bL21 (103 aa).

This sequence belongs to the bacterial ribosomal protein bL21 family. Part of the 50S ribosomal subunit. Contacts protein L20.

This protein binds to 23S rRNA in the presence of protein L20. The protein is Large ribosomal subunit protein bL21 of Polynucleobacter asymbioticus (strain DSM 18221 / CIP 109841 / QLW-P1DMWA-1) (Polynucleobacter necessarius subsp. asymbioticus).